We begin with the raw amino-acid sequence, 183 residues long: Holliday junction branch migration complex subunit RuvA (183 aa).

Positions 1–64 (MVVGIEGIIT…EDSNKFYGFL (64 aa)) are domain I. Positions 65–139 (DKDEQKMFEM…DTKTKLENVS (75 aa)) are domain II. Residue Ser139 is a region of interest, flexible linker. The segment at 139–183 (SDDKSEALAALLTLGFKQEKIISVLASAQATGTSELIKEALKKLG) is domain III.

It belongs to the RuvA family. Homotetramer. Forms an RuvA(8)-RuvB(12)-Holliday junction (HJ) complex. HJ DNA is sandwiched between 2 RuvA tetramers; dsDNA enters through RuvA and exits via RuvB. An RuvB hexamer assembles on each DNA strand where it exits the tetramer. Each RuvB hexamer is contacted by two RuvA subunits (via domain III) on 2 adjacent RuvB subunits; this complex drives branch migration. In the full resolvosome a probable DNA-RuvA(4)-RuvB(12)-RuvC(2) complex forms which resolves the HJ.

It localises to the cytoplasm. Its function is as follows. The RuvA-RuvB-RuvC complex processes Holliday junction (HJ) DNA during genetic recombination and DNA repair, while the RuvA-RuvB complex plays an important role in the rescue of blocked DNA replication forks via replication fork reversal (RFR). RuvA specifically binds to HJ cruciform DNA, conferring on it an open structure. The RuvB hexamer acts as an ATP-dependent pump, pulling dsDNA into and through the RuvAB complex. HJ branch migration allows RuvC to scan DNA until it finds its consensus sequence, where it cleaves and resolves the cruciform DNA. The sequence is that of Holliday junction branch migration complex subunit RuvA from Campylobacter jejuni subsp. jejuni serotype O:23/36 (strain 81-176).